Here is a 392-residue protein sequence, read N- to C-terminus: Leucine aminopeptidase 1 (392 aa).

Residues 1-18 form the signal peptide; sequence MKFSQASLLAACLPAISA. The propeptide occupies 19-82; that stretch reads RFIETAEADN…LGSTRLNAQT (64 aa). N-linked (GlcNAc...) asparagine glycosylation is present at Asn174. Zn(2+) contacts are provided by His182, Asp201, Glu240, and Asp267. An intrachain disulfide couples Cys316 to Cys320. Position 349 (His349) interacts with Zn(2+).

The protein belongs to the peptidase M28 family. M28E subfamily. Monomer. It depends on Zn(2+) as a cofactor.

The protein localises to the secreted. Extracellular aminopeptidase that allows assimilation of proteinaceous substrates. The polypeptide is Leucine aminopeptidase 1 (LAP1) (Fusarium vanettenii (strain ATCC MYA-4622 / CBS 123669 / FGSC 9596 / NRRL 45880 / 77-13-4) (Fusarium solani subsp. pisi)).